A 488-amino-acid chain; its full sequence is Alpha-ketoglutaric semialdehyde dehydrogenase (488 aa).

Residues lysine 180 and 233-238 (GSNQVG) contribute to the NAD(+) site. Glutamate 255 (proton acceptor) is an active-site residue. Catalysis depends on cysteine 289, which acts as the Nucleophile. 2 residues coordinate NAD(+): glutamine 336 and glutamate 390.

This sequence belongs to the aldehyde dehydrogenase family. In terms of assembly, homotetramer.

It catalyses the reaction 2,5-dioxopentanoate + NADP(+) + H2O = 2-oxoglutarate + NADPH + 2 H(+). The catalysed reaction is 2,5-dioxopentanoate + NAD(+) + H2O = 2-oxoglutarate + NADH + 2 H(+). In terms of biological role, catalyzes the NAD(P)(+)-dependent oxidation of alpha-ketoglutaric semialdehyde (alphaKGSA) to alpha-ketoglutarate. Prefers NADP(+) to NAD(+) as a cosubstrate. In vitro, can also use various aldehydes. In Bacillus subtilis (strain 168), this protein is Alpha-ketoglutaric semialdehyde dehydrogenase.